The following is a 402-amino-acid chain: Dual-specificity RNA methyltransferase RlmN (402 aa).

Residue Glu124 is the Proton acceptor of the active site. Positions 130-370 (DADRGTLCVS…APVRTPRGRD (241 aa)) constitute a Radical SAM core domain. A disulfide bridge connects residues Cys137 and Cys375. Positions 144, 148, and 151 each coordinate [4Fe-4S] cluster. Residues 199–200 (GE), Ser231, 253–255 (SLH), and Asn332 each bind S-adenosyl-L-methionine. The active-site S-methylcysteine intermediate is Cys375.

This sequence belongs to the radical SAM superfamily. RlmN family. Requires [4Fe-4S] cluster as cofactor.

The protein localises to the cytoplasm. The enzyme catalyses adenosine(2503) in 23S rRNA + 2 reduced [2Fe-2S]-[ferredoxin] + 2 S-adenosyl-L-methionine = 2-methyladenosine(2503) in 23S rRNA + 5'-deoxyadenosine + L-methionine + 2 oxidized [2Fe-2S]-[ferredoxin] + S-adenosyl-L-homocysteine. The catalysed reaction is adenosine(37) in tRNA + 2 reduced [2Fe-2S]-[ferredoxin] + 2 S-adenosyl-L-methionine = 2-methyladenosine(37) in tRNA + 5'-deoxyadenosine + L-methionine + 2 oxidized [2Fe-2S]-[ferredoxin] + S-adenosyl-L-homocysteine. Functionally, specifically methylates position 2 of adenine 2503 in 23S rRNA and position 2 of adenine 37 in tRNAs. m2A2503 modification seems to play a crucial role in the proofreading step occurring at the peptidyl transferase center and thus would serve to optimize ribosomal fidelity. The polypeptide is Dual-specificity RNA methyltransferase RlmN (Rhizorhabdus wittichii (strain DSM 6014 / CCUG 31198 / JCM 15750 / NBRC 105917 / EY 4224 / RW1) (Sphingomonas wittichii)).